The primary structure comprises 400 residues: MGRAKKVVLAYSGGVDTSVCIPYLKQEWGVEEVITLAADLGQGDELEPIREKALKSGASESLVADVKESFIKDYAFPAIQANALYENRYPLGTALARPLIAKILVEAAEKYGADAIAHGCTGKGNDQVRFDVSCTALNPKLKILAPAREWGMSREATIAYGEKFGIPSPVKKSSPYSIDKNLLGRSIEAGALEDPKFEPPEEIYEMTKAIADTPNEPEYIEIGFTQGLPTTINGTPKDPVALIQELNQLVGSHGVGRIDMIENRLVGIKSREIYESPAMLVLIQAHRDLESLTLTADVSHYKRGIEETYSQIVYNGLWYSPLKAALDAFIQKTQERVSGIVRVKLFKGNATIVGRWSDSSLYTPDLATYGAEDQFDHKAAEGFIYVWGLPTRIWAQQDRG.

Residues 10–18 (AYSGGVDTS) and alanine 38 contribute to the ATP site. L-citrulline is bound at residue tyrosine 89. Glycine 119 provides a ligand contact to ATP. The L-aspartate site is built by threonine 121, asparagine 125, and aspartate 126. Residue asparagine 125 coordinates L-citrulline. Arginine 129, serine 177, serine 186, glutamate 262, and tyrosine 274 together coordinate L-citrulline.

The protein belongs to the argininosuccinate synthase family. Type 1 subfamily. As to quaternary structure, homotetramer.

The protein resides in the cytoplasm. The enzyme catalyses L-citrulline + L-aspartate + ATP = 2-(N(omega)-L-arginino)succinate + AMP + diphosphate + H(+). It participates in amino-acid biosynthesis; L-arginine biosynthesis; L-arginine from L-ornithine and carbamoyl phosphate: step 2/3. The protein is Argininosuccinate synthase of Trichormus variabilis (strain ATCC 29413 / PCC 7937) (Anabaena variabilis).